Here is a 969-residue protein sequence, read N- to C-terminus: Alanine--tRNA ligase (969 aa).

The N-terminal 8 residues, 1-8, are a transit peptide targeting the mitochondrion; the sequence is MIKTLLRR. Zn(2+) is bound by residues H616, H620, C735, and H739.

It belongs to the class-II aminoacyl-tRNA synthetase family. In terms of assembly, monomer. Zn(2+) is required as a cofactor.

Its subcellular location is the mitochondrion. The protein resides in the cytoplasm. It catalyses the reaction tRNA(Ala) + L-alanine + ATP = L-alanyl-tRNA(Ala) + AMP + diphosphate. Its function is as follows. Catalyzes the attachment of alanine to tRNA(Ala) in a two-step reaction: alanine is first activated by ATP to form Ala-AMP and then transferred to the acceptor end of tRNA(Ala). Also edits incorrectly charged tRNA(Ala) via its editing domain. The chain is Alanine--tRNA ligase from Candida albicans (strain SC5314 / ATCC MYA-2876) (Yeast).